A 340-amino-acid chain; its full sequence is Uroporphyrinogen decarboxylase (340 aa).

Substrate contacts are provided by residues 21 to 25 (RQAGR), aspartate 71, tyrosine 148, serine 203, and histidine 316.

Belongs to the uroporphyrinogen decarboxylase family. In terms of assembly, homodimer.

It is found in the cytoplasm. It carries out the reaction uroporphyrinogen III + 4 H(+) = coproporphyrinogen III + 4 CO2. It participates in porphyrin-containing compound metabolism; protoporphyrin-IX biosynthesis; coproporphyrinogen-III from 5-aminolevulinate: step 4/4. Functionally, catalyzes the decarboxylation of four acetate groups of uroporphyrinogen-III to yield coproporphyrinogen-III. In Campylobacter hominis (strain ATCC BAA-381 / DSM 21671 / CCUG 45161 / LMG 19568 / NCTC 13146 / CH001A), this protein is Uroporphyrinogen decarboxylase.